Here is a 472-residue protein sequence, read N- to C-terminus: UDP-glucuronosyltransferase (472 aa).

N-linked (GlcNAc...) asparagine glycans are attached at residues Asn59, Asn227, and Asn377. Residues 436-456 (FGFILLILLTVLWVTLKCCLF) form a helical membrane-spanning segment.

Belongs to the UDP-glycosyltransferase family.

It localises to the microsome membrane. The protein localises to the endoplasmic reticulum membrane. It carries out the reaction glucuronate acceptor + UDP-alpha-D-glucuronate = acceptor beta-D-glucuronoside + UDP + H(+). Its function is as follows. UDPGT is of major importance in the conjugation and subsequent elimination of potentially toxic xenobiotics and endogenous compounds. This is UDP-glucuronosyltransferase (ugt3) from Pleuronectes platessa (European plaice).